Consider the following 211-residue polypeptide: uncharacterized protein (211 aa).

Residues histidine 54, histidine 56, aspartate 58, histidine 59, histidine 129, aspartate 148, and histidine 189 each coordinate Zn(2+).

This sequence belongs to the metallo-beta-lactamase superfamily. Glyoxalase II family. Zn(2+) is required as a cofactor.

This is an uncharacterized protein from Aquifex aeolicus (strain VF5).